The chain runs to 299 residues: Oxygen-dependent coproporphyrinogen-III oxidase (299 aa).

Position 92 (Ser92) interacts with substrate. A divalent metal cation is bound by residues His96 and His106. His106 functions as the Proton donor in the catalytic mechanism. 108-110 (NVR) is a binding site for substrate. The a divalent metal cation site is built by His145 and His175. The segment at 240–275 (YVEFNLVWDRGTLFGLQTGGRTESILMSMPPLVRWE) is important for dimerization. 258 to 260 (GGR) contacts substrate.

The protein belongs to the aerobic coproporphyrinogen-III oxidase family. As to quaternary structure, homodimer. A divalent metal cation serves as cofactor.

It localises to the cytoplasm. The enzyme catalyses coproporphyrinogen III + O2 + 2 H(+) = protoporphyrinogen IX + 2 CO2 + 2 H2O. The protein operates within porphyrin-containing compound metabolism; protoporphyrin-IX biosynthesis; protoporphyrinogen-IX from coproporphyrinogen-III (O2 route): step 1/1. In terms of biological role, involved in the heme biosynthesis. Catalyzes the aerobic oxidative decarboxylation of propionate groups of rings A and B of coproporphyrinogen-III to yield the vinyl groups in protoporphyrinogen-IX. This is Oxygen-dependent coproporphyrinogen-III oxidase from Shigella dysenteriae serotype 1 (strain Sd197).